The chain runs to 359 residues: AA9 family lytic polysaccharide monooxygenase C (359 aa).

Residues 1-16 (MKTGSILAALVASASA) form the signal peptide. Positions 17 and 99 each coordinate Cu(2+). 2 disulfide bridges follow: cysteine 55–cysteine 185 and cysteine 155–cysteine 243. O2 is bound by residues histidine 171 and glutamine 180. A Cu(2+)-binding site is contributed by tyrosine 182. N-linked (GlcNAc...) asparagine glycans are attached at residues asparagine 189 and asparagine 284. Positions 244 to 320 (PAGGSGGSSP…NPQPTNGGNS (77 aa)) are disordered. Over residues 251–296 (SSPAPATTASTPKPTSASAPKPVSTTASTPKPTNGSGSGTGAAHST) the composition is skewed to low complexity. The segment covering 307-319 (TKASNPQPTNGGN) has biased composition (polar residues). The CBM1 domain occupies 323–358 (RAAALYGQCGGKGWTGPTSCASGTCKFSNDWYSQCL).

It belongs to the polysaccharide monooxygenase AA9 family. The cofactor is Cu(2+).

It is found in the secreted. It catalyses the reaction [(1-&gt;4)-beta-D-glucosyl]n+m + reduced acceptor + O2 = 4-dehydro-beta-D-glucosyl-[(1-&gt;4)-beta-D-glucosyl]n-1 + [(1-&gt;4)-beta-D-glucosyl]m + acceptor + H2O.. With respect to regulation, activity in inhibited by excessive amounts of H(2)O(2). Functionally, lytic polysaccharide monooxygenase (LPMO) that depolymerizes crystalline and amorphous polysaccharides via the oxidation of scissile alpha- or beta-(1-4)-glycosidic bonds, yielding C4 oxidation products. Catalysis by LPMOs requires the reduction of the active-site copper from Cu(II) to Cu(I) by a reducing agent and H(2)O(2) or O(2) as a cosubstrate. Degrades various hemicelluloses, in particular xyloglucan. Active on tamarind xyloglucan and konjac glucomannan. Acts on the glucose backbone of xyloglucan, accepting various substitutions (xylose, galactose) in almost allpositions. In contrast to all previously characterized LPMOs, which are active only on polysaccharides, is able to cleave soluble cello-oligosaccharides as short as a tetramer. The cello-oligosaccharide products released by this enzyme contain a C4 gemdiol/keto group at the non-reducing end. Binds to the inner wood cell wall layer and consumes enzymatically generated H(2)O(2). The chain is AA9 family lytic polysaccharide monooxygenase C (gh61-3) from Neurospora crassa (strain ATCC 24698 / 74-OR23-1A / CBS 708.71 / DSM 1257 / FGSC 987).